The following is a 375-amino-acid chain: DNA replication and repair protein RecF (375 aa).

34–41 (GDNGAGKT) contributes to the ATP binding site.

Belongs to the RecF family.

The protein localises to the cytoplasm. Functionally, the RecF protein is involved in DNA metabolism; it is required for DNA replication and normal SOS inducibility. RecF binds preferentially to single-stranded, linear DNA. It also seems to bind ATP. The chain is DNA replication and repair protein RecF from Rhizobium rhizogenes (strain K84 / ATCC BAA-868) (Agrobacterium radiobacter).